The sequence spans 71 residues: Exodeoxyribonuclease 7 small subunit (71 aa).

The protein belongs to the XseB family. Heterooligomer composed of large and small subunits.

The protein localises to the cytoplasm. It catalyses the reaction Exonucleolytic cleavage in either 5'- to 3'- or 3'- to 5'-direction to yield nucleoside 5'-phosphates.. Functionally, bidirectionally degrades single-stranded DNA into large acid-insoluble oligonucleotides, which are then degraded further into small acid-soluble oligonucleotides. This Clostridium botulinum (strain ATCC 19397 / Type A) protein is Exodeoxyribonuclease 7 small subunit.